The primary structure comprises 172 residues: uncharacterized protein (172 aa).

3 helical membrane-spanning segments follow: residues 16-36 (IMIVIAIIITIGSFLFIAYLI), 68-88 (SFLIISLLCFYFGMLYIAGEL), and 89-109 (VISHILFIAICWIVVFLYIII).

It localises to the cell membrane. This is an uncharacterized protein from Methanocaldococcus jannaschii (strain ATCC 43067 / DSM 2661 / JAL-1 / JCM 10045 / NBRC 100440) (Methanococcus jannaschii).